Reading from the N-terminus, the 414-residue chain is Thyroid hormone receptor beta-B (414 aa).

The modulating stretch occupies residues Met-1–Leu-59. 2 consecutive NR C4-type zinc fingers follow at residues Cys-60–Cys-80 and Cys-98–Cys-122. The segment at residues Cys-60 to Asp-134 is a DNA-binding region (nuclear receptor). Residues Glu-170–Asp-414 form the NR LBD domain.

This sequence belongs to the nuclear hormone receptor family. NR1 subfamily.

The protein localises to the nucleus. High affinity receptor for triiodothyronine (T3). This Xenopus laevis (African clawed frog) protein is Thyroid hormone receptor beta-B (thrb-b).